Here is an 822-residue protein sequence, read N- to C-terminus: Protein smoothened (822 aa).

Positions methionine 1 to alanine 28 are cleaved as a signal peptide. At valine 29–tyrosine 212 the chain is on the extracellular side. An N-linked (GlcNAc...) asparagine glycan is attached at asparagine 34. Intrachain disulfides connect cysteine 42–cysteine 157, cysteine 48–cysteine 112, cysteine 56–cysteine 105, cysteine 96–cysteine 132, and cysteine 125–cysteine 147. The 118-residue stretch at lysine 43–glutamate 160 folds into the FZ domain. Aspartate 73 contacts cholesterol. An N-linked (GlcNAc...) asparagine glycan is attached at asparagine 167. 3 cysteine pairs are disulfide-bonded: cysteine 172–cysteine 192, cysteine 196–cysteine 274, and cysteine 293–cysteine 369. Residues isoleucine 213–alanine 233 form a helical membrane-spanning segment. Residues aspartate 234–tyrosine 241 are Cytoplasmic-facing. A helical transmembrane segment spans residues proline 242 to alanine 262. The Extracellular segment spans residues glutamine 263–cysteine 293. Residues valine 294–leucine 314 traverse the membrane as a helical segment. Residues threonine 315–lysine 335 lie on the Cytoplasmic side of the membrane. A helical transmembrane segment spans residues threonine 336 to alanine 356. The Extracellular segment spans residues asparagine 357–glycine 381. Tyrosine 373 lines the cholesterol pocket. Residues phenylalanine 382 to valine 402 form a helical membrane-spanning segment. At methionine 403–arginine 430 the chain is on the cytoplasmic side. Residues leucine 431–tyrosine 451 traverse the membrane as a helical segment. Residues aspartate 452–serine 503 are Extracellular-facing. The cysteines at positions 469 and 486 are disulfide-linked. Asparagine 472 carries N-linked (GlcNAc...) asparagine glycosylation. The chain crosses the membrane as a helical span at residues methionine 504–tryptophan 524. Topologically, residues lysine 525–phenylalanine 822 are cytoplasmic. Residues methionine 645 to proline 687 form a disordered region. A compositionally biased stretch (basic residues) spans lysine 647–glutamate 658.

The protein belongs to the G-protein coupled receptor Fz/Smo family. In terms of assembly, monomer.

It localises to the cell membrane. Its subcellular location is the cell projection. The protein resides in the cilium. Its function is as follows. G protein-coupled receptor which associates with the patched protein (ptch) to transduce Hedgehog protein signaling. Binding of sonic hedgehog (shh) to its receptor patched prevents inhibition of smoothened (smo) by patched. When active, smo binds to and sequesters protein kinase A catalytic subunit prkaca at the cell membrane, preventing prkaca-mediated phosphorylation of gli transcription factors which releases the gli proteins from prkaca-mediated inhibition and allows for transcriptional activation of Hedgehog signaling pathway target genes. Required for the development of primary and secondary motoneurons but not for the specification of midbrain dopaminergic neurons or development of the medial floor plate. Required for induction of lateral floor plate and posterior motoneurons, anterior neural plate patterning, dorsoventral forebrain patterning, dorsoventral retinal patterning, optic stalk development, and formation of the forebrain primary axonal scaffold. Required to regulate the formation of a subset of cerebellar neurons by limiting wnt1 expression which controls cerebellar expression of transcription factor olig2. Required for development of the pancreas. Required for muscle development. Required for the formation of a single continuous intestinal lumen from multiple discontinuous lumens, probably by regulating remodeling through rab11a-mediated trafficking to facilitate lumen fusion. Required for development of the adenohypophysis. Required for anteroposterior patterning of the otic vesicle. Required for development of the anterior craniofacial skeleton. Required for patterning of the caudal fin. Required during gastrulation and early somitogenesis stages to promote cardiomyocyte formation by regulating the specification of myocardial progenitors. Required for induction of arterial endothelial cell formation by repressing venous cell fate. The protein is Protein smoothened of Danio rerio (Zebrafish).